Reading from the N-terminus, the 920-residue chain is Sensor histidine kinase SsrA (920 aa).

At 1-19 (MNLLNLKNTLQTSLVIRLT) the chain is on the cytoplasmic side. A helical transmembrane segment spans residues 20–40 (FLFLLTTIIIWLLSVLTAAYI). Residues 41-291 (SMVQKRQHII…YGNLHNRILK (251 aa)) are Periplasmic-facing. A helical membrane pass occupies residues 292–312 (IILQQIPFTLTALVLMTSAFC). The Cytoplasmic segment spans residues 313-920 (WLLHRSLAKP…RMIFKNYTIT (608 aa)). The region spanning 317 to 369 (RSLAKPLWRFVDVINKTATAPLSTRLPAQRLDELDSIAGAFNQLLDTLQVQYD) is the HAMP domain. Residues 354-395 (AGAFNQLLDTLQVQYDNLENKVAERTQALNEAKKRAERANKR) are a coiled coil. Residues 402–614 (VISHELRTPM…CVSLVLPLQE (213 aa)) form the Histidine kinase domain. 2 residues coordinate ATP: His405 and Asp549. A Phosphohistidine; by autocatalysis modification is found at His405. One can recognise a Response regulatory domain in the interval 690–808 (QILLVDDADI…TLARYISIAA (119 aa)). At Asp739 the chain carries 4-aspartylphosphate.

Autophosphorylated.

The protein localises to the cell inner membrane. The catalysed reaction is ATP + protein L-histidine = ADP + protein N-phospho-L-histidine.. In terms of biological role, member of the two-component regulatory system SsrA/SsrB (SpiR/SsrB) that is required for intracellular proliferation and systemic dissemination within the host. When inside acidic Salmonella-containing vesicles (SCV) within host cells the SsrA sensor kinase autophosphorylates and the phosphoryl group is transferred to the response regulator SsrB; phosphorylated SsrB activates the expression of genes encoding virulence proteins, including pathogenicity island 2 (SPI2) and other horizontally acquired genes, and antagonizes the action of transcriptional repressor hns (H-NS). This chain is Sensor histidine kinase SsrA, found in Salmonella typhimurium (strain LT2 / SGSC1412 / ATCC 700720).